The chain runs to 591 residues: Isocitrate dehydrogenase kinase/phosphatase (591 aa).

Residues 322 to 328 (APGIRGL) and K343 contribute to the ATP site. D378 is an active-site residue.

Belongs to the AceK family.

It is found in the cytoplasm. It carries out the reaction L-seryl-[isocitrate dehydrogenase] + ATP = O-phospho-L-seryl-[isocitrate dehydrogenase] + ADP + H(+). Functionally, bifunctional enzyme which can phosphorylate or dephosphorylate isocitrate dehydrogenase (IDH) on a specific serine residue. This is a regulatory mechanism which enables bacteria to bypass the Krebs cycle via the glyoxylate shunt in response to the source of carbon. When bacteria are grown on glucose, IDH is fully active and unphosphorylated, but when grown on acetate or ethanol, the activity of IDH declines drastically concomitant with its phosphorylation. This Aromatoleum aromaticum (strain DSM 19018 / LMG 30748 / EbN1) (Azoarcus sp. (strain EbN1)) protein is Isocitrate dehydrogenase kinase/phosphatase.